The chain runs to 454 residues: MNKLKTDLNLIWNDICLELQKVISKEAIEKWFVPIELLSIENDQLLLKAPDPIYQYWIEENYLSQLIGASFRILAKNPKIIFAQESPGNGEKATGKKIKSLPREDKSSIFESKGLNTKFSFENFVVGPNSEFAAAAAKAVAESPAKAYNPLFLYGKVGLGKTHLMQAIGNHIVEKNKWILVQYVTSEQFTNEFIEAIQKGSIGQFRKKYRQIDVLLIDDIQFLAGKERSQEEFFHTFNCLFDGSKQIVLSGDEAPSSLQNLEKRLISRFEWGLTAEILPPGIEVRLAILKHKLKNYSLSIDEKILEFIAERIKTNVRQLEGALNRLCAYASIHKEGKITLEETQSLLKDLISLQPSKTITIEMIQKRVCEAYDIRFSDMVSKRRISAIALPRMVAMYLARRLTNLSLSQIGENFGGRDHGTVLHAQRTISEKMSKDPDLAQLIKKITEQLTSSQ.

A domain I, interacts with DnaA modulators region spans residues 1 to 76 (MNKLKTDLNL…IGASFRILAK (76 aa)). Residues 76-113 (KNPKIIFAQESPGNGEKATGKKIKSLPREDKSSIFESK) are domain II. A domain III, AAA+ region region spans residues 114–330 (GLNTKFSFEN…GALNRLCAYA (217 aa)). 4 residues coordinate ATP: G158, G160, K161, and T162. The tract at residues 331–454 (SIHKEGKITL…KITEQLTSSQ (124 aa)) is domain IV, binds dsDNA.

Belongs to the DnaA family. In terms of assembly, oligomerizes as a right-handed, spiral filament on DNA at oriC.

It localises to the cytoplasm. Functionally, plays an essential role in the initiation and regulation of chromosomal replication. ATP-DnaA binds to the origin of replication (oriC) to initiate formation of the DNA replication initiation complex once per cell cycle. Binds the DnaA box (a 9 base pair repeat at the origin) and separates the double-stranded (ds)DNA. Forms a right-handed helical filament on oriC DNA; dsDNA binds to the exterior of the filament while single-stranded (ss)DNA is stabiized in the filament's interior. The ATP-DnaA-oriC complex binds and stabilizes one strand of the AT-rich DNA unwinding element (DUE), permitting loading of DNA polymerase. After initiation quickly degrades to an ADP-DnaA complex that is not apt for DNA replication. Binds acidic phospholipids. The protein is Chromosomal replication initiator protein DnaA of Methylacidiphilum infernorum (isolate V4) (Methylokorus infernorum (strain V4)).